The sequence spans 350 residues: MRFIDQTEIFVKAGDGGDGMVAFRREKYVPAGGPAGGNGGRGGSVILQASTQLQTLLDFKYKHQFVAEDGKRGGPKNLTGASGQDRLIEVPCGTVIYDADSMTLLGDLTTNGQTLTVAQGGKGGLGNKHFLSNRNRAPEHALPGLPGEEFRLHLELKLLAEVGIIGLPNAGKSTLISVLSAARPKIADYPFTTLIPNLGVVPRATGDGTVFADIPGLIEGAHEGVGLGHDFLRHVERTRLLVHLVDATAEDPEQDYQTIQKELSAYGQGLQNRPQLLVLNKIDAMDSEQLLEKQACLEQMSGSPVYLISAVAQQGLDTLLQQVWEELDRLPNDLQEAPIPVLDSPILRET.

Positions 1 to 159 (MRFIDQTEIF…FRLHLELKLL (159 aa)) constitute an Obg domain. In terms of domain architecture, OBG-type G spans 160-328 (AEVGIIGLPN…LLQQVWEELD (169 aa)). Residues 166-173 (GLPNAGKS), 191-195 (FTTLI), 213-216 (DIPG), 280-283 (NKID), and 309-311 (SAV) contribute to the GTP site. Residues Ser-173 and Thr-193 each coordinate Mg(2+).

This sequence belongs to the TRAFAC class OBG-HflX-like GTPase superfamily. OBG GTPase family. In terms of assembly, monomer. It depends on Mg(2+) as a cofactor.

Its subcellular location is the cytoplasm. An essential GTPase which binds GTP, GDP and possibly (p)ppGpp with moderate affinity, with high nucleotide exchange rates and a fairly low GTP hydrolysis rate. Plays a role in control of the cell cycle, stress response, ribosome biogenesis and in those bacteria that undergo differentiation, in morphogenesis control. In Acaryochloris marina (strain MBIC 11017), this protein is GTPase Obg.